Consider the following 481-residue polypeptide: Matrix metalloproteinase-20 (481 aa).

An N-terminal signal peptide occupies residues 1–20 (MLPASGLAVLLVTALKFSTA). Positions 21 to 105 (APSLPAASPR…PRCGVPDVAN (85 aa)) are excised as a propeptide. Asparagine 64 carries an N-linked (GlcNAc...) asparagine glycan. A Cysteine switch motif is present at residues 96–103 (PRCGVPDV). Cysteine 98 serves as a coordination point for Zn(2+). 3 residues coordinate Ca(2+): glutamate 162, alanine 163, and aspartate 164. Residues histidine 174 and aspartate 176 each coordinate Zn(2+). Ca(2+) contacts are provided by aspartate 181, glycine 182, arginine 184, and threonine 186. Histidine 189 is a binding site for Zn(2+). 4 residues coordinate Ca(2+): glutamate 195, glycine 196, glycine 198, and aspartate 200. Zn(2+) is bound at residue histidine 202. The Ca(2+) site is built by aspartate 204 and glutamate 207. Residue histidine 224 participates in Zn(2+) binding. Glutamate 225 is an active-site residue. Residues histidine 228 and histidine 234 each coordinate Zn(2+). Hemopexin repeat units lie at residues 291–341 (PDLC…FPQL), 342–387 (MSNV…GFPR), 389–437 (VQRI…FSGV), and 438–481 (NGQI…WIGC). Cysteine 294 and cysteine 481 are oxidised to a cystine. The N-linked (GlcNAc...) asparagine glycan is linked to asparagine 297.

This sequence belongs to the peptidase M10A family. Requires Zn(2+) as cofactor. Ca(2+) serves as cofactor. Autoactivates at least at the 105-Asn-|-Tyr-106 site. As to expression, expressed in the enamel organ.

The protein resides in the secreted. It localises to the extracellular space. Its subcellular location is the extracellular matrix. In terms of biological role, degrades amelogenin, the major protein component of the enamel matrix and two of the macromolecules characterizing the cartilage extracellular matrix: aggrecan and the cartilage oligomeric matrix protein (COMP). May play a central role in tooth enamel formation. Cleaves aggrecan at the '360-Ser-|-Phe-361' site. The protein is Matrix metalloproteinase-20 (MMP20) of Bos taurus (Bovine).